The sequence spans 216 residues: Gamma-glutamylcyclotransferase 2-1 (216 aa).

5-10 (VFGYGS) is a binding site for substrate. E87 serves as the catalytic Proton acceptor.

Belongs to the gamma-glutamylcyclotransferase family. It depends on Mn(2+) as a cofactor. Expressed in the central vascular bundle of roots, leaf veins, hydathodes, cauline leaves, shoot apex, sepal veins, flower receptacles and developing seeds.

It localises to the cytoplasm. It carries out the reaction an alpha-(gamma-L-glutamyl)-L-amino acid = 5-oxo-L-proline + an L-alpha-amino acid. In terms of biological role, catalyzes the formation of 5-oxoproline from gamma-glutamyl dipeptides and plays a significant role in glutathione (GSH) homeostasis. Converts both GSH and gamma-glutamyl-L-alanine to 5-oxoproline in vitro. Plays a role in detoxification of heavy metals and metalloids by recycling glutamate and maintaining GSH homeostasis. This is Gamma-glutamylcyclotransferase 2-1 from Arabidopsis thaliana (Mouse-ear cress).